Here is a 448-residue protein sequence, read N- to C-terminus: Antizyme inhibitor 1 (448 aa).

It belongs to the Orn/Lys/Arg decarboxylase class-II family. ODC antizyme inhibitor subfamily. In terms of assembly, monomer. Interacts with OAZ1 and OAZ3; this interaction disrupts the interaction between the antizyme and ODC1. In terms of processing, ubiquitinated, leading to its proteasomal degradation; a process that is reduced in presence of antizyme OAZ1. As to expression, expressed during testis development.

It localises to the nucleus. Antizyme inhibitor (AZI) protein that positively regulates ornithine decarboxylase (ODC) activity and polyamine uptake. AZI is an enzymatically inactive ODC homolog that counteracts the negative effect of ODC antizymes (AZs) OAZ1, OAZ2 and OAZ3 on ODC activity by competing with ODC for antizyme-binding. Inhibits antizyme-dependent ODC degradation and releases ODC monomers from their inactive complex with antizymes, leading to formation of the catalytically active ODC homodimer and restoring polyamine production. In Mus musculus (Mouse), this protein is Antizyme inhibitor 1 (Azin1).